A 511-amino-acid chain; its full sequence is Apolipoprotein N-acyltransferase (511 aa).

6 helical membrane-spanning segments follow: residues 7-29 (PGWP…LAPF), 58-78 (GWWY…VSIH), 90-110 (LLML…AWLW), 125-145 (LAFA…LTGF), 163-183 (VPVG…ALLV), and 192-212 (GASL…GLYL). A CN hydrolase domain is found at 230–470 (IQGNIAQELK…QGILRGEVIP (241 aa)). The active-site Proton acceptor is E269. Residue K330 is part of the active site. C382 serves as the catalytic Nucleophile. Residues 482–502 (VWPLAGLAGVLLLWALLGRQL) form a helical membrane-spanning segment.

The protein belongs to the CN hydrolase family. Apolipoprotein N-acyltransferase subfamily.

Its subcellular location is the cell inner membrane. It carries out the reaction N-terminal S-1,2-diacyl-sn-glyceryl-L-cysteinyl-[lipoprotein] + a glycerophospholipid = N-acyl-S-1,2-diacyl-sn-glyceryl-L-cysteinyl-[lipoprotein] + a 2-acyl-sn-glycero-3-phospholipid + H(+). It participates in protein modification; lipoprotein biosynthesis (N-acyl transfer). Its function is as follows. Catalyzes the phospholipid dependent N-acylation of the N-terminal cysteine of apolipoprotein, the last step in lipoprotein maturation. The protein is Apolipoprotein N-acyltransferase of Pseudomonas aeruginosa (strain ATCC 15692 / DSM 22644 / CIP 104116 / JCM 14847 / LMG 12228 / 1C / PRS 101 / PAO1).